A 592-amino-acid polypeptide reads, in one-letter code: Arginine--tRNA ligase (592 aa).

Residues alanine 129 to histidine 139 carry the 'HIGH' region motif.

Belongs to the class-I aminoacyl-tRNA synthetase family. Monomer.

It is found in the cytoplasm. The enzyme catalyses tRNA(Arg) + L-arginine + ATP = L-arginyl-tRNA(Arg) + AMP + diphosphate. The chain is Arginine--tRNA ligase from Dichelobacter nodosus (strain VCS1703A).